A 179-amino-acid chain; its full sequence is Probable splicing factor, arginine/serine-rich 6 (179 aa).

In terms of domain architecture, RRM spans 3–76; the sequence is AKVYVGGLPS…VRARVELSTG (74 aa). Residues 75–179 are disordered; it reads TGQRRGGGGR…RSRSRSASPH (105 aa). Residues 78–93 show a composition bias toward gly residues; it reads RRGGGGRGGGFGGRGG. The segment covering 94–160 has biased composition (basic and acidic residues); the sequence is GGRDRSPYRG…RSPQERDRSH (67 aa). Residues 161–173 show a composition bias toward basic residues; sequence SKSRSRSRSRSRS.

The protein belongs to the splicing factor SR family. Post-translationally, extensively phosphorylated on serine residues in the RS domain.

Its subcellular location is the nucleus. In terms of biological role, plays a functionally redundant role in shifting germ cell sexual differentiation in hermaprodites. Required for the development of somatic gonad structures and for progression from larval stage to adulthood. The polypeptide is Probable splicing factor, arginine/serine-rich 6 (rsp-6) (Caenorhabditis elegans).